The chain runs to 173 residues: Putative metal-dependent hydrolase BCG9842_B2589 (173 aa).

Residues histidine 65, histidine 156, and histidine 160 each coordinate Zn(2+).

The protein belongs to the metal hydrolase YfiT family. Homodimer. It depends on Zn(2+) as a cofactor.

The protein localises to the cytoplasm. In terms of biological role, possible metal-dependent hydrolase. This chain is Putative metal-dependent hydrolase BCG9842_B2589, found in Bacillus cereus (strain G9842).